The sequence spans 123 residues: Ribosome-binding factor A (123 aa).

The protein belongs to the RbfA family. In terms of assembly, monomer. Binds 30S ribosomal subunits, but not 50S ribosomal subunits or 70S ribosomes.

The protein localises to the cytoplasm. One of several proteins that assist in the late maturation steps of the functional core of the 30S ribosomal subunit. Associates with free 30S ribosomal subunits (but not with 30S subunits that are part of 70S ribosomes or polysomes). Required for efficient processing of 16S rRNA. May interact with the 5'-terminal helix region of 16S rRNA. The protein is Ribosome-binding factor A of Variovorax paradoxus (strain S110).